Here is a 218-residue protein sequence, read N- to C-terminus: uncharacterized protein (218 aa).

Residues H57, H59, D61, H62, H138, D158, and H199 each contribute to the Zn(2+) site.

The protein belongs to the metallo-beta-lactamase superfamily. Glyoxalase II family. It depends on Zn(2+) as a cofactor.

This is an uncharacterized protein from Mycobacterium leprae (strain TN).